The sequence spans 360 residues: Peptide chain release factor 1 (360 aa).

Glutamine 235 carries the N5-methylglutamine modification. The interval 284 to 313 is disordered; sequence AKRQQAEASTRRNLLGSGDRSDRNRTYNFP.

It belongs to the prokaryotic/mitochondrial release factor family. In terms of processing, methylated by PrmC. Methylation increases the termination efficiency of RF1.

It localises to the cytoplasm. Its function is as follows. Peptide chain release factor 1 directs the termination of translation in response to the peptide chain termination codons UAG and UAA. The sequence is that of Peptide chain release factor 1 from Citrobacter koseri (strain ATCC BAA-895 / CDC 4225-83 / SGSC4696).